We begin with the raw amino-acid sequence, 507 residues long: ATP synthase subunit alpha, chloroplastic (507 aa).

170-177 serves as a coordination point for ATP; it reads GDRQTGKT.

This sequence belongs to the ATPase alpha/beta chains family. F-type ATPases have 2 components, CF(1) - the catalytic core - and CF(0) - the membrane proton channel. CF(1) has five subunits: alpha(3), beta(3), gamma(1), delta(1), epsilon(1). CF(0) has four main subunits: a, b, b' and c.

It localises to the plastid. It is found in the chloroplast thylakoid membrane. The enzyme catalyses ATP + H2O + 4 H(+)(in) = ADP + phosphate + 5 H(+)(out). In terms of biological role, produces ATP from ADP in the presence of a proton gradient across the membrane. The alpha chain is a regulatory subunit. The sequence is that of ATP synthase subunit alpha, chloroplastic from Sorghum bicolor (Sorghum).